The following is a 139-amino-acid chain: Peptide methionine sulfoxide reductase MsrB (139 aa).

In terms of domain architecture, MsrB spans 14–137; it reads DEEWRRELTP…NSISLDFQPE (124 aa). 4 residues coordinate Zn(2+): Cys-53, Cys-56, Cys-102, and Cys-105. Catalysis depends on Cys-126, which acts as the Nucleophile.

The protein belongs to the MsrB Met sulfoxide reductase family. The cofactor is Zn(2+).

The enzyme catalyses L-methionyl-[protein] + [thioredoxin]-disulfide + H2O = L-methionyl-(R)-S-oxide-[protein] + [thioredoxin]-dithiol. The protein is Peptide methionine sulfoxide reductase MsrB of Leifsonia xyli subsp. xyli (strain CTCB07).